The sequence spans 417 residues: Serine hydroxymethyltransferase (417 aa).

(6S)-5,6,7,8-tetrahydrofolate is bound by residues leucine 121 and 125 to 127 (GHL). Lysine 229 bears the N6-(pyridoxal phosphate)lysine mark. Residue 354 to 356 (SPF) coordinates (6S)-5,6,7,8-tetrahydrofolate.

The protein belongs to the SHMT family. Homodimer. Pyridoxal 5'-phosphate serves as cofactor.

The protein localises to the cytoplasm. The catalysed reaction is (6R)-5,10-methylene-5,6,7,8-tetrahydrofolate + glycine + H2O = (6S)-5,6,7,8-tetrahydrofolate + L-serine. The protein operates within one-carbon metabolism; tetrahydrofolate interconversion. Its pathway is amino-acid biosynthesis; glycine biosynthesis; glycine from L-serine: step 1/1. In terms of biological role, catalyzes the reversible interconversion of serine and glycine with tetrahydrofolate (THF) serving as the one-carbon carrier. This reaction serves as the major source of one-carbon groups required for the biosynthesis of purines, thymidylate, methionine, and other important biomolecules. Also exhibits THF-independent aldolase activity toward beta-hydroxyamino acids, producing glycine and aldehydes, via a retro-aldol mechanism. The chain is Serine hydroxymethyltransferase from Dichelobacter nodosus (strain VCS1703A).